Consider the following 354-residue polypeptide: Fructose-1,6-bisphosphatase class 1 (354 aa).

The Mg(2+) site is built by Glu112, Asp134, Leu136, and Asp137. Residues 137 to 140, Asn229, Tyr257, and Lys287 contribute to the substrate site; that span reads DGSS. Glu293 serves as a coordination point for Mg(2+).

This sequence belongs to the FBPase class 1 family. As to quaternary structure, homotetramer. Requires Mg(2+) as cofactor.

Its subcellular location is the cytoplasm. It catalyses the reaction beta-D-fructose 1,6-bisphosphate + H2O = beta-D-fructose 6-phosphate + phosphate. It functions in the pathway carbohydrate biosynthesis; Calvin cycle. The chain is Fructose-1,6-bisphosphatase class 1 from Trichodesmium erythraeum (strain IMS101).